Here is a 324-residue protein sequence, read N- to C-terminus: Probable WRKY transcription factor 53 (324 aa).

The disordered stretch occupies residues 93-126 (NPGSVPESPASINGSPRSEEFADGGGSSESHHRQ). The WRKY DNA-binding region spans 152-220 (GLEGPQDDVF…YRGTHTCSQA (69 aa)).

The protein belongs to the WRKY group III family. In terms of assembly, interacts with ESR/ESP and UPL5. Binds to WRKY30. In terms of processing, ubiquitinated by UPL5. Ubiquitination leads to its subsequent degradation, thus controlling the timing of leaf senescence.

The protein localises to the nucleus. Transcription factor. Interacts specifically with the W box (5'-(T)TGAC[CT]-3'), a frequently occurring elicitor-responsive cis-acting element. May regulate the early events of leaf senescence. Negatively regulates the expression of ESR/ESP. Together with WRKY46 and WRKY70, promotes resistance to P.syringae, probably by enhancing salicylic acid (SA)- dependent genes. Contributes to the suppression of jasmonic acid (MeJA)-induced expression of PDF1.2. The chain is Probable WRKY transcription factor 53 from Arabidopsis thaliana (Mouse-ear cress).